Reading from the N-terminus, the 475-residue chain is Ras-GEF domain-containing family member 1A (475 aa).

Residues 33-164 (QDGSLVSGSL…SISQMTQNVL (132 aa)) enclose the N-terminal Ras-GEF domain. One can recognise a Ras-GEF domain in the interval 208-455 (DPLILAQQLT…FLASFENEGP (248 aa)).

Its function is as follows. Guanine nucleotide exchange factor (GEF) with specificity for rap2a and other Ras family proteins (in vitro). Plays a role in cell migration. This is Ras-GEF domain-containing family member 1A (rasgef1a) from Xenopus tropicalis (Western clawed frog).